Here is a 223-residue protein sequence, read N- to C-terminus: Deoxyribose-phosphate aldolase 2 (223 aa).

The Proton donor/acceptor role is filled by D89. The active-site Schiff-base intermediate with acetaldehyde is the K152. The Proton donor/acceptor role is filled by K181.

It belongs to the DeoC/FbaB aldolase family. DeoC type 1 subfamily.

It localises to the cytoplasm. The catalysed reaction is 2-deoxy-D-ribose 5-phosphate = D-glyceraldehyde 3-phosphate + acetaldehyde. It participates in carbohydrate degradation; 2-deoxy-D-ribose 1-phosphate degradation; D-glyceraldehyde 3-phosphate and acetaldehyde from 2-deoxy-alpha-D-ribose 1-phosphate: step 2/2. In terms of biological role, catalyzes a reversible aldol reaction between acetaldehyde and D-glyceraldehyde 3-phosphate to generate 2-deoxy-D-ribose 5-phosphate. The protein is Deoxyribose-phosphate aldolase 2 of Bacillus licheniformis (strain ATCC 14580 / DSM 13 / JCM 2505 / CCUG 7422 / NBRC 12200 / NCIMB 9375 / NCTC 10341 / NRRL NRS-1264 / Gibson 46).